The sequence spans 246 residues: Phycobilisome rod-core linker polypeptide CpcG2 (246 aa).

Residues 11–189 (SSQNQRVAGY…YWRDKLENSR (179 aa)) enclose the PBS-linker domain. Positions 224-246 (DTTRRDRPTVPASINPTASFPLR) are disordered. Residues 235–246 (ASINPTASFPLR) are compositionally biased toward polar residues.

Belongs to the phycobilisome linker protein family. As to quaternary structure, the phycobilisome is a hemidiscoidal structure that is composed of two distinct substructures: a core complex and a number of rods radiating from the core.

Its subcellular location is the cellular thylakoid membrane. Rod-core linker protein required for attachment of phycocyanin to allophycocyanin in cores of phycobilisomes. Functionally, linker polypeptides determine the state of aggregation and the location of the disk-shaped phycobiliprotein units within the phycobilisome and modulate their spectroscopic properties in order to mediate a directed and optimal energy transfer. In Thermosynechococcus vestitus (strain NIES-2133 / IAM M-273 / BP-1), this protein is Phycobilisome rod-core linker polypeptide CpcG2 (cpcG2).